Reading from the N-terminus, the 100-residue chain is Aspartyl/glutamyl-tRNA(Asn/Gln) amidotransferase subunit C (100 aa).

Belongs to the GatC family. As to quaternary structure, heterotrimer of A, B and C subunits.

The enzyme catalyses L-glutamyl-tRNA(Gln) + L-glutamine + ATP + H2O = L-glutaminyl-tRNA(Gln) + L-glutamate + ADP + phosphate + H(+). The catalysed reaction is L-aspartyl-tRNA(Asn) + L-glutamine + ATP + H2O = L-asparaginyl-tRNA(Asn) + L-glutamate + ADP + phosphate + 2 H(+). Functionally, allows the formation of correctly charged Asn-tRNA(Asn) or Gln-tRNA(Gln) through the transamidation of misacylated Asp-tRNA(Asn) or Glu-tRNA(Gln) in organisms which lack either or both of asparaginyl-tRNA or glutaminyl-tRNA synthetases. The reaction takes place in the presence of glutamine and ATP through an activated phospho-Asp-tRNA(Asn) or phospho-Glu-tRNA(Gln). The polypeptide is Aspartyl/glutamyl-tRNA(Asn/Gln) amidotransferase subunit C (Staphylococcus epidermidis (strain ATCC 35984 / DSM 28319 / BCRC 17069 / CCUG 31568 / BM 3577 / RP62A)).